The following is a 338-amino-acid chain: tRNA(Ile)-lysidine synthase (338 aa).

23-28 is a binding site for ATP; sequence SGGLDS.

It belongs to the tRNA(Ile)-lysidine synthase family.

Its subcellular location is the cytoplasm. It carries out the reaction cytidine(34) in tRNA(Ile2) + L-lysine + ATP = lysidine(34) in tRNA(Ile2) + AMP + diphosphate + H(+). Ligates lysine onto the cytidine present at position 34 of the AUA codon-specific tRNA(Ile) that contains the anticodon CAU, in an ATP-dependent manner. Cytidine is converted to lysidine, thus changing the amino acid specificity of the tRNA from methionine to isoleucine. This is tRNA(Ile)-lysidine synthase from Helicobacter pylori (strain J99 / ATCC 700824) (Campylobacter pylori J99).